Reading from the N-terminus, the 234-residue chain is Glucosamine-6-phosphate deaminase (234 aa).

Asp-62 functions as the Proton acceptor; for enolization step in the catalytic mechanism. Asn-128 serves as the catalytic For ring-opening step. His-130 functions as the Proton acceptor; for ring-opening step in the catalytic mechanism. The active-site For ring-opening step is the Glu-135.

The protein belongs to the glucosamine/galactosamine-6-phosphate isomerase family. NagB subfamily.

It catalyses the reaction alpha-D-glucosamine 6-phosphate + H2O = beta-D-fructose 6-phosphate + NH4(+). Its pathway is amino-sugar metabolism; N-acetylneuraminate degradation; D-fructose 6-phosphate from N-acetylneuraminate: step 5/5. Functionally, catalyzes the reversible isomerization-deamination of glucosamine 6-phosphate (GlcN6P) to form fructose 6-phosphate (Fru6P) and ammonium ion. This chain is Glucosamine-6-phosphate deaminase, found in Streptococcus pyogenes serotype M18 (strain MGAS8232).